Consider the following 361-residue polypeptide: Peptide chain release factor 1 (361 aa).

Position 237 is an N5-methylglutamine (glutamine 237). Positions 283 to 307 are disordered; it reads AQQQEQQEQQSSTRKELIGSGDRSQ.

This sequence belongs to the prokaryotic/mitochondrial release factor family. Methylated by PrmC. Methylation increases the termination efficiency of RF1.

It localises to the cytoplasm. Functionally, peptide chain release factor 1 directs the termination of translation in response to the peptide chain termination codons UAG and UAA. The chain is Peptide chain release factor 1 from Vesicomyosocius okutanii subsp. Calyptogena okutanii (strain HA).